We begin with the raw amino-acid sequence, 203 residues long: EF-hand calcium-binding domain-containing protein 8 (203 aa).

The tract at residues serine 61–glutamine 107 is disordered. The span at arginine 87–glutamine 107 shows a compositional bias: polar residues. EF-hand domains are found at residues methionine 111–serine 145 and methionine 146–glycine 181.

The sequence is that of EF-hand calcium-binding domain-containing protein 8 (Efcab8) from Mus musculus (Mouse).